Reading from the N-terminus, the 61-residue chain is Small ribosomal subunit protein uS14B (61 aa).

C24, C27, C40, and C43 together coordinate Zn(2+).

This sequence belongs to the universal ribosomal protein uS14 family. Zinc-binding uS14 subfamily. Part of the 30S ribosomal subunit. Contacts proteins S3 and S10. Zn(2+) is required as a cofactor.

Its function is as follows. Binds 16S rRNA, required for the assembly of 30S particles and may also be responsible for determining the conformation of the 16S rRNA at the A site. The sequence is that of Small ribosomal subunit protein uS14B from Limosilactobacillus reuteri (strain DSM 20016) (Lactobacillus reuteri).